Consider the following 312-residue polypeptide: Salivary protein SG34 (312 aa).

Positions 1-20 are cleaved as a signal peptide; the sequence is MSPSKKILVLLLFPILLVSS. Positions 95 to 158 form a coiled coil; it reads NMEVQLLRES…QEEIEEQTKQ (64 aa).

This sequence belongs to the salivary protein SG34 family. In terms of tissue distribution, female salivary gland (at protein level). Low-level expression in ovary.

Possible serine protease. Functionally, (Microbial infection) Modulates replication of duck Tembusu virus in salivary glands and virus release into the saliva, probably via the regulation of antimicrobial peptides expression in response to virus infection. Its function is as follows. (Microbial infection) Enhances replication of dengue virus type 2 in human keratinocytes, probably by suppressing the production of type I interferons and antimicrobial peptides in response to virus infection. In Aedes aegypti (Yellowfever mosquito), this protein is Salivary protein SG34.